The following is a 583-amino-acid chain: Threonine--tRNA ligase (583 aa).

A catalytic region spans residues 185–478 (DHRKLGRELN…LVEHYGGAFP (294 aa)). Residues C278, H329, and H455 each coordinate Zn(2+).

The protein belongs to the class-II aminoacyl-tRNA synthetase family. In terms of assembly, homodimer. It depends on Zn(2+) as a cofactor.

It is found in the cytoplasm. The enzyme catalyses tRNA(Thr) + L-threonine + ATP = L-threonyl-tRNA(Thr) + AMP + diphosphate + H(+). Its function is as follows. Catalyzes the attachment of threonine to tRNA(Thr) in a two-step reaction: L-threonine is first activated by ATP to form Thr-AMP and then transferred to the acceptor end of tRNA(Thr). Also edits incorrectly charged L-seryl-tRNA(Thr). The chain is Threonine--tRNA ligase from Borrelia recurrentis (strain A1).